An 84-amino-acid polypeptide reads, in one-letter code: UPF0473 protein CPF_2030 (84 aa).

Belongs to the UPF0473 family.

This is UPF0473 protein CPF_2030 from Clostridium perfringens (strain ATCC 13124 / DSM 756 / JCM 1290 / NCIMB 6125 / NCTC 8237 / Type A).